The primary structure comprises 227 residues: Fibrillarin-like rRNA/tRNA 2'-O-methyltransferase (227 aa).

Residues 86–87 (TT), 105–106 (EF), 130–131 (DA), and 150–153 (DVAQ) contribute to the S-adenosyl-L-methionine site.

Belongs to the methyltransferase superfamily. Fibrillarin family. In terms of assembly, interacts with nop5. Component of box C/D small ribonucleoprotein (sRNP) particles that contain rpl7ae, FlpA and nop5, plus a guide RNA.

Functionally, involved in pre-rRNA and tRNA processing. Utilizes the methyl donor S-adenosyl-L-methionine to catalyze the site-specific 2'-hydroxyl methylation of ribose moieties in rRNA and tRNA. Site specificity is provided by a guide RNA that base pairs with the substrate. Methylation occurs at a characteristic distance from the sequence involved in base pairing with the guide RNA. The sequence is that of Fibrillarin-like rRNA/tRNA 2'-O-methyltransferase from Pyrococcus abyssi (strain GE5 / Orsay).